The following is a 471-amino-acid chain: Venom prothrombin activator vestarin-D2 (471 aa).

Residues 1–20 (MAPQLLLCLILTFLWSLPEA) form the signal peptide. Residues 21 to 40 (ESNVFLKSNVANRFLQRTKR) constitute a propeptide that is removed on maturation. In terms of domain architecture, Gla spans 41 to 86 (ANSIFEEIRPGNIERECVEEKCSKEEAREVFQDNEKTEAFWTVYVD). 10 positions are modified to 4-carboxyglutamate: E46, E47, E54, E56, E59, E60, E65, E66, E69, and E75. A disulfide bridge links C57 with C62. Residues 86–122 (DGDQCLSNPCHYRGTCKDGIGSYTCTCLPGYEGKNCE) form the EGF-like 1; calcium-binding domain. Cystine bridges form between C90/C101, C95/C110, C112/C121, C129/C140, C136/C149, C151/C164, C172/C333, C233/C238, C381/C395, and C406/C434. O-linked (Hex...) serine glycosylation is present at S92. The 36-residue stretch at 129-164 (CRLFNGNCWHFCKTVQNDTQCSCAEGYRLGVDGFSC) folds into the EGF-like 2 domain. Positions 182–226 (REASLPDFHFSDDYDAIDENNLVETVQSQSATLLKKSDNPSPDIR) are cleaved as a propeptide — activation peptide. The Peptidase S1 domain occupies 227–458 (IVSGLDCKLG…FIPWIKTIMR (232 aa)). H268 functions as the Charge relay system in the catalytic mechanism. N271 carries an N-linked (GlcNAc...) asparagine glycan. D313 serves as the catalytic Charge relay system. S410 acts as the Charge relay system in catalysis.

It belongs to the peptidase S1 family. Snake venom subfamily. As to quaternary structure, heterodimer of a light chain and a heavy chain; disulfide-linked. In terms of processing, the vitamin K-dependent, enzymatic carboxylation of some glutamate residues allows the modified protein to bind calcium. As to expression, expressed by the venom gland.

The protein localises to the secreted. The enzyme catalyses Selective cleavage of Arg-|-Thr and then Arg-|-Ile bonds in prothrombin to form thrombin.. Its function is as follows. Snake prothrombin activator that attacks the hemostatic system of prey. This protein is functionally similar to blood coagulation factor Xa. The chain is Venom prothrombin activator vestarin-D2 from Demansia vestigiata (Lesser black whip snake).